A 306-amino-acid polypeptide reads, in one-letter code: MTNEFLHFEKISRQTWQSLHRKTTPPLTEEELESIKSFNDQISLQDVTDIYLPLAHLIQIYKRTKEDLAFSKGIFLQRESKSQPFIIGVSGSVAVGKSTTSRLLQILLSRTFTDATVELVTTDGFLYPNQTLIEQGILNRKGFPESYNMEALLNFLDRIKNGQDVDIPVYSHEVYDIVPEEKQSVKAADFVIVEGINVFQNPQNDRLYITDFFDFSIYVDAGVDDIESWYLDRFLKMLSLAQNDPDSYYYRFTQMPIGEVEAFAHQVWTSINLTNLQNYIEPTRNRAEVILHKSKNHEIDEIYLKK.

91 to 98 is a binding site for ATP; it reads GSVAVGKS.

The protein belongs to the prokaryotic pantothenate kinase family.

It localises to the cytoplasm. It carries out the reaction (R)-pantothenate + ATP = (R)-4'-phosphopantothenate + ADP + H(+). Its pathway is cofactor biosynthesis; coenzyme A biosynthesis; CoA from (R)-pantothenate: step 1/5. This chain is Pantothenate kinase, found in Streptococcus pneumoniae (strain 70585).